Reading from the N-terminus, the 215-residue chain is tRNA (guanine-N(7)-)-methyltransferase (215 aa).

Residues Asp43, Glu68, Asn95, and Asp121 each contribute to the S-adenosyl-L-methionine site. Asp121 is an active-site residue. Positions 125 and 157 each coordinate substrate.

It belongs to the class I-like SAM-binding methyltransferase superfamily. TrmB family.

It catalyses the reaction guanosine(46) in tRNA + S-adenosyl-L-methionine = N(7)-methylguanosine(46) in tRNA + S-adenosyl-L-homocysteine. The protein operates within tRNA modification; N(7)-methylguanine-tRNA biosynthesis. In terms of biological role, catalyzes the formation of N(7)-methylguanine at position 46 (m7G46) in tRNA. The sequence is that of tRNA (guanine-N(7)-)-methyltransferase from Trichormus variabilis (strain ATCC 29413 / PCC 7937) (Anabaena variabilis).